We begin with the raw amino-acid sequence, 317 residues long: F-box protein FBW2 (317 aa).

Residues 7-54 (FRHWDELIPDALGLIFSHLPLQEVLTVVPRVCKAWNRAVTGPYCWQEI) form the F-box domain.

As to quaternary structure, part of a SCF (SKP1-cullin-F-box) protein ligase complex. Interacts with CUL1, CUL2 and SPK1B/ASK2.

Its subcellular location is the nucleus. The protein operates within protein modification; protein ubiquitination. In terms of biological role, component of SCF(ASK-cullin-F-box) E3 ubiquitin ligase complexes, which may mediate the ubiquitination and subsequent proteasomal degradation of target proteins. This is F-box protein FBW2 (FBW2) from Arabidopsis thaliana (Mouse-ear cress).